We begin with the raw amino-acid sequence, 297 residues long: Homoserine kinase (297 aa).

Proline 79–alanine 89 contributes to the ATP binding site.

This sequence belongs to the GHMP kinase family. Homoserine kinase subfamily.

It localises to the cytoplasm. It carries out the reaction L-homoserine + ATP = O-phospho-L-homoserine + ADP + H(+). It functions in the pathway amino-acid biosynthesis; L-threonine biosynthesis; L-threonine from L-aspartate: step 4/5. Its function is as follows. Catalyzes the ATP-dependent phosphorylation of L-homoserine to L-homoserine phosphate. The protein is Homoserine kinase of Pyrobaculum aerophilum (strain ATCC 51768 / DSM 7523 / JCM 9630 / CIP 104966 / NBRC 100827 / IM2).